Here is a 360-residue protein sequence, read N- to C-terminus: ACT1-like protein (360 aa).

A disordered region spans residues 339-360 (KKQSHNNANDHHEDSMNYSITQ).

In terms of assembly, interacts with the receptor complex composed of ilcr-1 and ilcr-2. Also interacts with pik-1. As to expression, expressed in neurons.

Functionally, may act as an adapter to facilitate downstream signaling for the receptor complex composed of ilcr-1 and ilcr-2, which is a signaling complex that modulates neuronal activity and animal behavior in response to sensory neuron input. In Caenorhabditis elegans, this protein is ACT1-like protein.